The chain runs to 616 residues: Dihydroxy-acid dehydratase (616 aa).

D81 is a Mg(2+) binding site. C122 contributes to the [2Fe-2S] cluster binding site. D123 and K124 together coordinate Mg(2+). K124 carries the N6-carboxylysine modification. C195 contacts [2Fe-2S] cluster. E491 is a Mg(2+) binding site. Residue S517 is the Proton acceptor of the active site.

The protein belongs to the IlvD/Edd family. In terms of assembly, homodimer. [2Fe-2S] cluster is required as a cofactor. The cofactor is Mg(2+).

The enzyme catalyses (2R)-2,3-dihydroxy-3-methylbutanoate = 3-methyl-2-oxobutanoate + H2O. The catalysed reaction is (2R,3R)-2,3-dihydroxy-3-methylpentanoate = (S)-3-methyl-2-oxopentanoate + H2O. It functions in the pathway amino-acid biosynthesis; L-isoleucine biosynthesis; L-isoleucine from 2-oxobutanoate: step 3/4. It participates in amino-acid biosynthesis; L-valine biosynthesis; L-valine from pyruvate: step 3/4. Functionally, functions in the biosynthesis of branched-chain amino acids. Catalyzes the dehydration of (2R,3R)-2,3-dihydroxy-3-methylpentanoate (2,3-dihydroxy-3-methylvalerate) into 2-oxo-3-methylpentanoate (2-oxo-3-methylvalerate) and of (2R)-2,3-dihydroxy-3-methylbutanoate (2,3-dihydroxyisovalerate) into 2-oxo-3-methylbutanoate (2-oxoisovalerate), the penultimate precursor to L-isoleucine and L-valine, respectively. The chain is Dihydroxy-acid dehydratase from Pectobacterium atrosepticum (strain SCRI 1043 / ATCC BAA-672) (Erwinia carotovora subsp. atroseptica).